The sequence spans 417 residues: UDP-N-acetylglucosamine 1-carboxyvinyltransferase (417 aa).

22–23 (KN) lines the phosphoenolpyruvate pocket. R93 contacts UDP-N-acetyl-alpha-D-glucosamine. The Proton donor role is filled by C117. C117 is modified (2-(S-cysteinyl)pyruvic acid O-phosphothioketal). 2 residues coordinate UDP-N-acetyl-alpha-D-glucosamine: D304 and I326.

It belongs to the EPSP synthase family. MurA subfamily.

The protein localises to the cytoplasm. The enzyme catalyses phosphoenolpyruvate + UDP-N-acetyl-alpha-D-glucosamine = UDP-N-acetyl-3-O-(1-carboxyvinyl)-alpha-D-glucosamine + phosphate. The protein operates within cell wall biogenesis; peptidoglycan biosynthesis. Its function is as follows. Cell wall formation. Adds enolpyruvyl to UDP-N-acetylglucosamine. This is UDP-N-acetylglucosamine 1-carboxyvinyltransferase from Neisseria gonorrhoeae (strain ATCC 700825 / FA 1090).